The sequence spans 558 residues: Sinalpyl alcohol oxidase Nec3 (558 aa).

A signal peptide spans 1–28; the sequence is MATMAILQRTFSFILIFSIALHLKSLFA. 64–65 lines the FAD pocket; it reads TA. N-linked (GlcNAc...) asparagine glycosylation occurs at Asn76. FAD-binding positions include 83–84, Val131, Ser135, and 139–142; these read ER and NFGF. Asn180 carries N-linked (GlcNAc...) asparagine glycosylation. Val247 contributes to the FAD binding site. N-linked (GlcNAc...) asparagine glycans are attached at residues Asn308, Asn386, and Asn473. An intrachain disulfide couples Cys433 to Cys484. 492–493 is a binding site for FAD; the sequence is YH. His493 functions as the Proton donor in the catalytic mechanism. Asn531 serves as the catalytic Proton acceptor. 532–533 lines the FAD pocket; the sequence is PQ.

This sequence belongs to the GMC oxidoreductase family. As to quaternary structure, monomer. The cofactor is FAD. As to expression, confined to nectaries.

The enzyme catalyses (E)-sinapyl alcohol + O2 = (E)-sinapaldehyde + H2O2. Its pathway is alkaloid biosynthesis. Functionally, involved in the production of blood-red nectar containing the alkaloid nesocodin and that serves as a visual attractant for pollinator visitation, including vertebrates such as Phelsuma geckos. The nectar is initially acidic and pale yellow, but slowly becomes alkaline before turning into red within 24 hours. Together with NEC1 and NEC2, facilitates the condensation of sinapaldehyde ((E)-3,5-dimethoxy-4-hydroxycinnamaldehyde) and proline to form nesocodin, a pigment with a stable imine bond. Catalyzes the conversion of sinapyl alcohol to sinapaldehyde. This Nesocodon mauritianus (Blue Mauritius bellflower) protein is Sinalpyl alcohol oxidase Nec3.